The following is a 424-amino-acid chain: UPF0053 protein MG146 homolog (424 aa).

Residues 6–191 (SGGLLALIII…EQNGLFTKED (186 aa)) enclose the CNNM transmembrane domain. A run of 4 helical transmembrane segments spans residues 7 to 27 (GGLLALIIISIILLACISAVV), 71 to 91 (LITILVANNIVAILVSNILFL), 101 to 121 (AISSALNLLISGVLLLMLCEI), and 135 to 155 (LVYFAVVVYFFYILFWPITKL). CBS domains follow at residues 210–270 (MIKW…NEPF) and 275–335 (LLYP…EHDE).

Belongs to the UPF0053 family.

It is found in the cell membrane. In Mycoplasma pneumoniae (strain ATCC 29342 / M129 / Subtype 1) (Mycoplasmoides pneumoniae), this protein is UPF0053 protein MG146 homolog.